Consider the following 138-residue polypeptide: Putative transcriptional regulatory protein NedR (138 aa).

Residues 1–25 form a disordered region; it reads MCWGRSWTFGRSSSKGWRPTSSASS. Residues 9 to 25 are compositionally biased toward polar residues; that stretch reads FGRSSSKGWRPTSSASS.

May serve as a transcriptional regulator. This Micromonospora viridifaciens protein is Putative transcriptional regulatory protein NedR (nedR).